The sequence spans 367 residues: D-alanine--D-alanine ligase (367 aa).

Positions Lys139–Ser340 constitute an ATP-grasp domain. Lys169–Asn224 is a binding site for ATP. 3 residues coordinate Mg(2+): Asp298, Glu311, and Asn313.

It belongs to the D-alanine--D-alanine ligase family. Mg(2+) serves as cofactor. It depends on Mn(2+) as a cofactor.

It localises to the cytoplasm. The enzyme catalyses 2 D-alanine + ATP = D-alanyl-D-alanine + ADP + phosphate + H(+). Its pathway is cell wall biogenesis; peptidoglycan biosynthesis. Its function is as follows. Cell wall formation. The sequence is that of D-alanine--D-alanine ligase from Thermosipho africanus (strain TCF52B).